A 290-amino-acid polypeptide reads, in one-letter code: Pantothenate synthetase (290 aa).

34–41 (MGNLHDGH) contacts ATP. His-41 serves as the catalytic Proton donor. Gln-65 is a binding site for (R)-pantoate. Gln-65 is a beta-alanine binding site. An ATP-binding site is contributed by 156-159 (GKKD). Gln-162 lines the (R)-pantoate pocket. ATP contacts are provided by residues Ala-185 and 193-196 (LSSR).

The protein belongs to the pantothenate synthetase family. In terms of assembly, homodimer.

It localises to the cytoplasm. It carries out the reaction (R)-pantoate + beta-alanine + ATP = (R)-pantothenate + AMP + diphosphate + H(+). The protein operates within cofactor biosynthesis; (R)-pantothenate biosynthesis; (R)-pantothenate from (R)-pantoate and beta-alanine: step 1/1. Its function is as follows. Catalyzes the condensation of pantoate with beta-alanine in an ATP-dependent reaction via a pantoyl-adenylate intermediate. The protein is Pantothenate synthetase of Acidovorax ebreus (strain TPSY) (Diaphorobacter sp. (strain TPSY)).